The chain runs to 219 residues: Elongation factor Ts (219 aa).

Residues 82–85 are involved in Mg(2+) ion dislocation from EF-Tu; it reads TDFV.

It belongs to the EF-Ts family.

It localises to the cytoplasm. In terms of biological role, associates with the EF-Tu.GDP complex and induces the exchange of GDP to GTP. It remains bound to the aminoacyl-tRNA.EF-Tu.GTP complex up to the GTP hydrolysis stage on the ribosome. The protein is Elongation factor Ts of Trichodesmium erythraeum (strain IMS101).